A 103-amino-acid chain; its full sequence is Small ribosomal subunit protein uS10 (103 aa).

It belongs to the universal ribosomal protein uS10 family. Part of the 30S ribosomal subunit.

Functionally, involved in the binding of tRNA to the ribosomes. This Chlorobium phaeobacteroides (strain DSM 266 / SMG 266 / 2430) protein is Small ribosomal subunit protein uS10.